The primary structure comprises 305 residues: Sulfate adenylyltransferase subunit 2 (305 aa).

The protein belongs to the PAPS reductase family. CysD subfamily. In terms of assembly, heterodimer composed of CysD, the smaller subunit, and CysN.

It catalyses the reaction sulfate + ATP + H(+) = adenosine 5'-phosphosulfate + diphosphate. It participates in sulfur metabolism; hydrogen sulfide biosynthesis; sulfite from sulfate: step 1/3. Functionally, with CysN forms the ATP sulfurylase (ATPS) that catalyzes the adenylation of sulfate producing adenosine 5'-phosphosulfate (APS) and diphosphate, the first enzymatic step in sulfur assimilation pathway. APS synthesis involves the formation of a high-energy phosphoric-sulfuric acid anhydride bond driven by GTP hydrolysis by CysN coupled to ATP hydrolysis by CysD. The sequence is that of Sulfate adenylyltransferase subunit 2 from Pseudomonas savastanoi pv. phaseolicola (strain 1448A / Race 6) (Pseudomonas syringae pv. phaseolicola (strain 1448A / Race 6)).